Reading from the N-terminus, the 190-residue chain is Putative cyclic ADP-D-ribose synthase ThsB (190 aa).

Belongs to the Thoeris B TIR-like family. As to quaternary structure, homodimer.

It is found in the cytoplasm. Its activity is regulated as follows. Activated upon phage infection. Functionally, TIR-like domain-containing component of the Thoeris antiviral defense system, composed of ThsA and ThsB. Expression of ThsA and ThsB in B.subtilis (strain BEST7003) confers resistance to phages SBSphiC, SBSphiJ and SPO1. Phage infection activates this protein, generating a signal molecule that in turn activates ThsA. Probably hydrolyzes NAD(+) to make a cyclic ADP-D-ribose (cADPR) signaling molecule; might make 3'cADPR. The polypeptide is Putative cyclic ADP-D-ribose synthase ThsB (Bacillus amyloliquefaciens (strain Y2) (Bacillus amyloliquefaciens subsp. plantarum (strain B9601-Y2))).